The sequence spans 586 residues: Dihydroxy-acid dehydratase 2 (586 aa).

A [2Fe-2S] cluster-binding site is contributed by C68. Residue D100 participates in Mg(2+) binding. Residue C141 participates in [2Fe-2S] cluster binding. Mg(2+)-binding residues include D142 and K143. The residue at position 143 (K143) is an N6-carboxylysine. C213 contacts [2Fe-2S] cluster. Residue E463 coordinates Mg(2+). Residue S489 is the Proton acceptor of the active site.

Belongs to the IlvD/Edd family. In terms of assembly, homodimer. Requires [2Fe-2S] cluster as cofactor. The cofactor is Mg(2+).

It catalyses the reaction (2R)-2,3-dihydroxy-3-methylbutanoate = 3-methyl-2-oxobutanoate + H2O. It carries out the reaction (2R,3R)-2,3-dihydroxy-3-methylpentanoate = (S)-3-methyl-2-oxopentanoate + H2O. It functions in the pathway amino-acid biosynthesis; L-isoleucine biosynthesis; L-isoleucine from 2-oxobutanoate: step 3/4. The protein operates within amino-acid biosynthesis; L-valine biosynthesis; L-valine from pyruvate: step 3/4. Functions in the biosynthesis of branched-chain amino acids. Catalyzes the dehydration of (2R,3R)-2,3-dihydroxy-3-methylpentanoate (2,3-dihydroxy-3-methylvalerate) into 2-oxo-3-methylpentanoate (2-oxo-3-methylvalerate) and of (2R)-2,3-dihydroxy-3-methylbutanoate (2,3-dihydroxyisovalerate) into 2-oxo-3-methylbutanoate (2-oxoisovalerate), the penultimate precursor to L-isoleucine and L-valine, respectively. The polypeptide is Dihydroxy-acid dehydratase 2 (Mesorhizobium japonicum (strain LMG 29417 / CECT 9101 / MAFF 303099) (Mesorhizobium loti (strain MAFF 303099))).